A 182-amino-acid polypeptide reads, in one-letter code: Dual-action ribosomal maturation protein DarP (182 aa).

It belongs to the DarP family.

The protein localises to the cytoplasm. Functionally, member of a network of 50S ribosomal subunit biogenesis factors which assembles along the 30S-50S interface, preventing incorrect 23S rRNA structures from forming. Promotes peptidyl transferase center (PTC) maturation. This Serratia proteamaculans (strain 568) protein is Dual-action ribosomal maturation protein DarP.